Consider the following 269-residue polypeptide: Triosephosphate isomerase (269 aa).

Substrate is bound at residue asparagine 8 to lysine 10. Residue histidine 105 is the Electrophile of the active site. Residue glutamate 183 is the Proton acceptor of the active site. Residues glycine 189, serine 227, and glycine 248–glycine 249 each bind substrate.

This sequence belongs to the triosephosphate isomerase family. As to quaternary structure, homodimer.

It localises to the cytoplasm. It catalyses the reaction D-glyceraldehyde 3-phosphate = dihydroxyacetone phosphate. It functions in the pathway carbohydrate biosynthesis; gluconeogenesis. The protein operates within carbohydrate degradation; glycolysis; D-glyceraldehyde 3-phosphate from glycerone phosphate: step 1/1. In terms of biological role, involved in the gluconeogenesis. Catalyzes stereospecifically the conversion of dihydroxyacetone phosphate (DHAP) to D-glyceraldehyde-3-phosphate (G3P). The polypeptide is Triosephosphate isomerase (Psychrobacter cryohalolentis (strain ATCC BAA-1226 / DSM 17306 / VKM B-2378 / K5)).